We begin with the raw amino-acid sequence, 575 residues long: Aspartate--tRNA ligase (575 aa).

Glutamate 169 serves as a coordination point for L-aspartate. Residues 193–196 (QLFK) form an aspartate region. Residue arginine 215 participates in L-aspartate binding. ATP is bound by residues 215 to 217 (RDE) and glutamine 224. An L-aspartate-binding site is contributed by histidine 438. Glutamate 472 is a binding site for ATP. Position 479 (arginine 479) interacts with L-aspartate. 524–527 (GLDR) contributes to the ATP binding site.

The protein belongs to the class-II aminoacyl-tRNA synthetase family. Type 1 subfamily. Homodimer.

It localises to the cytoplasm. The catalysed reaction is tRNA(Asp) + L-aspartate + ATP = L-aspartyl-tRNA(Asp) + AMP + diphosphate. Its function is as follows. Catalyzes the attachment of L-aspartate to tRNA(Asp) in a two-step reaction: L-aspartate is first activated by ATP to form Asp-AMP and then transferred to the acceptor end of tRNA(Asp). This Mycoplasma capricolum subsp. capricolum (strain California kid / ATCC 27343 / NCTC 10154) protein is Aspartate--tRNA ligase.